A 317-amino-acid chain; its full sequence is Osteopontin (317 aa).

Residues 1 to 16 (MRLAVVCFCLFGLASC) form the signal peptide. Phosphoserine is present on residues serine 26, serine 27, serine 60, serine 62, and serine 63. The tract at residues 43–297 (WLKPDPSQKQ…LVLDPKSKED (255 aa)) is disordered. The segment covering 49-63 (SQKQNLLAPQNSVSS) has biased composition (polar residues). At threonine 66 the chain carries Phosphothreonine. 8 positions are modified to phosphoserine: serine 76, serine 78, serine 81, serine 106, serine 109, serine 112, serine 115, and serine 118. Residues 86–110 (DDDDDDDDDGDHAESEDSVNSDESD) show a composition bias toward acidic residues. O-linked (GalNAc...) threonine glycans are attached at residues threonine 123, threonine 132, and threonine 137. The Cell attachment site motif lies at 144 to 146 (RGD). Phosphothreonine occurs at positions 170 and 175. The span at 174 to 187 (LTSRMKSQESDEAI) shows a compositional bias: basic and acidic residues. A phosphoserine mark is found at serine 176, serine 180, serine 200, serine 204, serine 209, serine 213, and serine 219. Residues 197–216 (SVPSDQDSNGKTSHESSQLD) are compositionally biased toward polar residues. An O-linked (Xyl...) (chondroitin sulfate) serine glycan is attached at serine 219. The residue at position 222 (threonine 222) is a Phosphothreonine. Basic and acidic residues-rich tracts occupy residues 223–240 (HSLE…HEST) and 248–263 (SAEK…RSDA). Phosphoserine occurs at positions 224, 228, 257, 261, 266, 270, 273, 278, 283, 294, 306, 311, 313, and 314. The span at 273–297 (SLEHQSHEFHSHEDKLVLDPKSKED) shows a compositional bias: basic and acidic residues. Serine 311 is a glycosylation site (O-linked (Xyl...) (chondroitin sulfate) serine).

It belongs to the osteopontin family. Interacts (via N-terminus) with integrin ITGA9:ITGB1. Extensively phosphorylated by FAM20C in the extracellular medium at multiple sites within the S-x-E/pS motif. The phosphorylated form inhibits hydroxyapatite crystallization. Dephosphorylation via a mechanism involving ALPL/TNAP promotes hydroxyapatite crystallization. In terms of processing, O-glycosylated. Post-translationally, forms covalent cross-links mediated by transglutaminase TGM2, between a glutamine and the epsilon-amino group of a lysine residue, forming homopolymers and heteropolymers, increasing its collagen binding properties.

The protein localises to the secreted. Major non-collagenous bone protein that binds tightly to hydroxyapatite. Appears to form an integral part of the mineralized matrix. Probably important to cell-matrix interaction. In terms of biological role, acts as a cytokine involved in enhancing production of interferon-gamma and interleukin-12 and reducing production of interleukin-10 and is essential in the pathway that leads to type I immunity. This is Osteopontin (Spp1) from Rattus norvegicus (Rat).